The sequence spans 167 residues: UPF0179 protein PAE0681 (167 aa).

Residues 142–167 (PSPSGSSISATSQGPSRAPPSRRLLK) are disordered. A compositionally biased stretch (low complexity) spans 145–157 (SGSSISATSQGPS).

This sequence belongs to the UPF0179 family.

This chain is UPF0179 protein PAE0681, found in Pyrobaculum aerophilum (strain ATCC 51768 / DSM 7523 / JCM 9630 / CIP 104966 / NBRC 100827 / IM2).